The sequence spans 228 residues: L-ribulose-5-phosphate 4-epimerase UlaF (228 aa).

Residues 26–27, 43–44, and 72–73 each bind substrate; these read GN, SG, and SS. Zn(2+) contacts are provided by aspartate 74, histidine 93, and histidine 95. The active-site Proton donor/acceptor is the aspartate 118. Histidine 167 contributes to the Zn(2+) binding site. Tyrosine 225 (proton donor/acceptor) is an active-site residue.

This sequence belongs to the aldolase class II family. AraD/FucA subfamily. The cofactor is Zn(2+).

The enzyme catalyses L-ribulose 5-phosphate = D-xylulose 5-phosphate. It participates in cofactor degradation; L-ascorbate degradation; D-xylulose 5-phosphate from L-ascorbate: step 4/4. Functionally, catalyzes the isomerization of L-ribulose 5-phosphate to D-xylulose 5-phosphate. Is involved in the anaerobic L-ascorbate utilization. This Salmonella choleraesuis (strain SC-B67) protein is L-ribulose-5-phosphate 4-epimerase UlaF.